A 117-amino-acid polypeptide reads, in one-letter code: UPF0342 protein OB1136 (117 aa).

The protein belongs to the UPF0342 family.

This chain is UPF0342 protein OB1136, found in Oceanobacillus iheyensis (strain DSM 14371 / CIP 107618 / JCM 11309 / KCTC 3954 / HTE831).